Here is a 354-residue protein sequence, read N- to C-terminus: uncharacterized protein (354 aa).

Positions 309–326 (VNSANSINTANTRSQTGG) are enriched in polar residues. The interval 309–333 (VNSANSINTANTRSQTGGQDEEDFE) is disordered. Positions 326 to 353 (GQDEEDFEKKYKKYKNKYAKLKNQKTSN) form a coiled coil.

It is found in the virion. This is an uncharacterized protein from Acanthamoeba polyphaga (Amoeba).